Consider the following 669-residue polypeptide: DNA ligase (669 aa).

NAD(+) contacts are provided by residues 32-36 (DAEYD), 81-82 (SL), and glutamate 113. Lysine 115 serves as the catalytic N6-AMP-lysine intermediate. NAD(+) is bound by residues arginine 136, glutamate 173, lysine 290, and lysine 314. Cysteine 408, cysteine 411, cysteine 426, and cysteine 432 together coordinate Zn(2+). The 78-residue stretch at 592–669 (AVDSALAGKI…DEQALIEFLK (78 aa)) folds into the BRCT domain.

It belongs to the NAD-dependent DNA ligase family. LigA subfamily. Mg(2+) is required as a cofactor. Requires Mn(2+) as cofactor.

The catalysed reaction is NAD(+) + (deoxyribonucleotide)n-3'-hydroxyl + 5'-phospho-(deoxyribonucleotide)m = (deoxyribonucleotide)n+m + AMP + beta-nicotinamide D-nucleotide.. In terms of biological role, DNA ligase that catalyzes the formation of phosphodiester linkages between 5'-phosphoryl and 3'-hydroxyl groups in double-stranded DNA using NAD as a coenzyme and as the energy source for the reaction. It is essential for DNA replication and repair of damaged DNA. The protein is DNA ligase of Vibrio cholerae serotype O1 (strain ATCC 39315 / El Tor Inaba N16961).